A 320-amino-acid polypeptide reads, in one-letter code: Lipoyl synthase (320 aa).

Residues C67, C72, C78, C93, C97, C100, and S307 each contribute to the [4Fe-4S] cluster site. The Radical SAM core domain maps to 79–296 (FNHGTATFMI…RDKANEMGFE (218 aa)).

This sequence belongs to the radical SAM superfamily. Lipoyl synthase family. The cofactor is [4Fe-4S] cluster.

Its subcellular location is the cytoplasm. The catalysed reaction is [[Fe-S] cluster scaffold protein carrying a second [4Fe-4S](2+) cluster] + N(6)-octanoyl-L-lysyl-[protein] + 2 oxidized [2Fe-2S]-[ferredoxin] + 2 S-adenosyl-L-methionine + 4 H(+) = [[Fe-S] cluster scaffold protein] + N(6)-[(R)-dihydrolipoyl]-L-lysyl-[protein] + 4 Fe(3+) + 2 hydrogen sulfide + 2 5'-deoxyadenosine + 2 L-methionine + 2 reduced [2Fe-2S]-[ferredoxin]. It functions in the pathway protein modification; protein lipoylation via endogenous pathway; protein N(6)-(lipoyl)lysine from octanoyl-[acyl-carrier-protein]: step 2/2. Functionally, catalyzes the radical-mediated insertion of two sulfur atoms into the C-6 and C-8 positions of the octanoyl moiety bound to the lipoyl domains of lipoate-dependent enzymes, thereby converting the octanoylated domains into lipoylated derivatives. This Haemophilus influenzae (strain ATCC 51907 / DSM 11121 / KW20 / Rd) protein is Lipoyl synthase.